A 408-amino-acid polypeptide reads, in one-letter code: Two-pore potassium channel 5 (408 aa).

2 disordered regions span residues 1–29 and 58–82; these read MEPLISPQPRFRLQPIPENPSSSSSSASI and QSVQDDKEDQDSDSDETNRFLSQTR. Residues 15-29 show a composition bias toward low complexity; sequence PIPENPSSSSSSASI. The Stromal segment spans residues 22–115; sequence SSSSSASITI…TKKPSPVSKS (94 aa). Residues 63-72 are compositionally biased toward acidic residues; that stretch reads DKEDQDSDSD. Residues 116 to 136 form a helical membrane-spanning segment; that stretch reads IIRQAIFLLIVYLTLGVSIYS. An intramembrane region (pore-forming) is located at residues 152 to 171; sequence DALYFCIVTMCTIGYGDIAP. A helical transmembrane segment spans residues 178–198; that stretch reads IFAVVFVLFGFGFLDILLSGV. Over 199–248 the chain is Stromal; the sequence is VNYVLDLQESMILTGIQTRQHHQHHHHHRFSAKDYIIDFEKGRMRIRMKV. The chain crosses the membrane as a helical span at residues 249–269; sequence CLALCVVVLCIGVGALVLHFV. Positions 276-295 form an intramembrane region, pore-forming; that stretch reads DSVYLSVMSVTTVGYGDRAF. The helical transmembrane segment at 302 to 322 threads the bilayer; the sequence is LFAAVWLLVSTLAVARAFLYL. The Stromal portion of the chain corresponds to 323-408; it reads AEARIDRRHR…TLPDLLGDPL (86 aa). 2 consecutive EF-hand domains span residues 339–374 and 378–408; these read LNREITVDDLLKADTYQHGFISKSEYIVLKLKEMGK and KDIDQVVIQFEKLDPNQIGKITLPDLLGDPL. Asp352, Glu363, Asp391, Asn393, Lys397, and Asp402 together coordinate Ca(2+).

It belongs to the two pore domain potassium channel (TC 1.A.1.7) family. Homodimer. As to expression, expressed in hydathodes and the vascular tissues of roots, stems, leaves and flowers.

The protein resides in the vacuole membrane. Probable voltage-independent potassium-selective tonoplast ion channel. This Arabidopsis thaliana (Mouse-ear cress) protein is Two-pore potassium channel 5 (TPK5).